The sequence spans 805 residues: Sucrose synthase (805 aa).

The tract at residues 275–752 (MVFNVVILSP…GLKRIQEKYT (478 aa)) is GT-B glycosyltransferase.

It belongs to the glycosyltransferase 1 family. Plant sucrose synthase subfamily.

It carries out the reaction an NDP-alpha-D-glucose + D-fructose = a ribonucleoside 5'-diphosphate + sucrose + H(+). Sucrose-cleaving enzyme that provides UDP-glucose and fructose for various metabolic pathways. The sequence is that of Sucrose synthase from Solanum tuberosum (Potato).